Here is a 456-residue protein sequence, read N- to C-terminus: Phosphomethylpyrimidine synthase (456 aa).

Residues asparagine 80, methionine 109, tyrosine 139, histidine 175, serine 195–glycine 197, aspartate 236–arginine 239, and glutamate 275 each bind substrate. Zn(2+) is bound at residue histidine 279. Tyrosine 302 provides a ligand contact to substrate. Histidine 343 is a Zn(2+) binding site. Residues cysteine 423, cysteine 426, and cysteine 431 each contribute to the [4Fe-4S] cluster site.

It belongs to the ThiC family. It depends on [4Fe-4S] cluster as a cofactor.

It catalyses the reaction 5-amino-1-(5-phospho-beta-D-ribosyl)imidazole + S-adenosyl-L-methionine = 4-amino-2-methyl-5-(phosphooxymethyl)pyrimidine + CO + 5'-deoxyadenosine + formate + L-methionine + 3 H(+). It participates in cofactor biosynthesis; thiamine diphosphate biosynthesis. Functionally, catalyzes the synthesis of the hydroxymethylpyrimidine phosphate (HMP-P) moiety of thiamine from aminoimidazole ribotide (AIR) in a radical S-adenosyl-L-methionine (SAM)-dependent reaction. The polypeptide is Phosphomethylpyrimidine synthase (Prochlorococcus marinus (strain MIT 9215)).